Here is a 394-residue protein sequence, read N- to C-terminus: Phosphoglycerate kinase (394 aa).

Substrate-binding positions include D21–N23, R37, H60–R63, R119, and R152. ATP contacts are provided by residues K202, G293, E324, and G350 to S353.

It belongs to the phosphoglycerate kinase family. As to quaternary structure, monomer.

The protein localises to the cytoplasm. It catalyses the reaction (2R)-3-phosphoglycerate + ATP = (2R)-3-phospho-glyceroyl phosphate + ADP. It participates in carbohydrate degradation; glycolysis; pyruvate from D-glyceraldehyde 3-phosphate: step 2/5. This is Phosphoglycerate kinase from Caldanaerobacter subterraneus subsp. tengcongensis (strain DSM 15242 / JCM 11007 / NBRC 100824 / MB4) (Thermoanaerobacter tengcongensis).